The sequence spans 624 residues: Dihydroxy-acid dehydratase (624 aa).

Asp-81 contacts Mg(2+). Cys-122 contributes to the [2Fe-2S] cluster binding site. Mg(2+)-binding residues include Asp-123 and Lys-124. At Lys-124 the chain carries N6-carboxylysine. Cys-195 contributes to the [2Fe-2S] cluster binding site. Glu-499 provides a ligand contact to Mg(2+). Ser-525 acts as the Proton acceptor in catalysis.

The protein belongs to the IlvD/Edd family. Homodimer. [2Fe-2S] cluster serves as cofactor. It depends on Mg(2+) as a cofactor.

It carries out the reaction (2R)-2,3-dihydroxy-3-methylbutanoate = 3-methyl-2-oxobutanoate + H2O. It catalyses the reaction (2R,3R)-2,3-dihydroxy-3-methylpentanoate = (S)-3-methyl-2-oxopentanoate + H2O. Its pathway is amino-acid biosynthesis; L-isoleucine biosynthesis; L-isoleucine from 2-oxobutanoate: step 3/4. The protein operates within amino-acid biosynthesis; L-valine biosynthesis; L-valine from pyruvate: step 3/4. Its function is as follows. Functions in the biosynthesis of branched-chain amino acids. Catalyzes the dehydration of (2R,3R)-2,3-dihydroxy-3-methylpentanoate (2,3-dihydroxy-3-methylvalerate) into 2-oxo-3-methylpentanoate (2-oxo-3-methylvalerate) and of (2R)-2,3-dihydroxy-3-methylbutanoate (2,3-dihydroxyisovalerate) into 2-oxo-3-methylbutanoate (2-oxoisovalerate), the penultimate precursor to L-isoleucine and L-valine, respectively. The protein is Dihydroxy-acid dehydratase of Shewanella baltica (strain OS155 / ATCC BAA-1091).